The primary structure comprises 145 residues: Putative type I specificity subunit S.MpnORF289P C-terminus (145 aa).

The protein belongs to the type-I restriction system S methylase family. As to quaternary structure, the methyltransferase is composed of M and S polypeptides.

In terms of biological role, the C-terminal section of a specificity (S) subunit of a type I methyltransferase (MTase); this subunit dictates DNA sequence specificity. The single R subunit has multiple frameshifts and is probably not expressed. The protein is Putative type I specificity subunit S.MpnORF289P C-terminus of Mycoplasma pneumoniae (strain ATCC 29342 / M129 / Subtype 1) (Mycoplasmoides pneumoniae).